The following is a 1432-amino-acid chain: Gag-Pol polyprotein (1432 aa).

The N-myristoyl glycine; by host moiety is linked to residue Gly-2. The tract at residues 7 to 31 (ILSGGKLDDWEKIRLRPGGKKKYRI) is interaction with Gp41. Positions 8 to 43 (LSGGKLDDWEKIRLRPGGKKKYRIKHLVWASRELDR) are interaction with host CALM1. An interaction with host AP3D1 region spans residues 12–19 (KLDDWEKI). The interaction with membrane phosphatidylinositol 4,5-bisphosphate and RNA stretch occupies residues 14–33 (DDWEKIRLRPGGKKKYRIKH). A Nuclear export signal motif is present at residues 16 to 22 (WEKIRLR). The short motif at 26 to 32 (KKKYRIK) is the Nuclear localization signal element. Residues 73-77 (QEIKS) are interaction with membrane phosphatidylinositol 4,5-bisphosphate. Phosphotyrosine; by host is present on Tyr-132. The interaction with human PPIA/CYPA and NUP153 stretch occupies residues 189–227 (NTIGGHQAAMQMLKDTINEEAAEWDRVHPVHAGPIAPGQ). Residues 277–363 (YSPVSILDIR…GGPGHKARVL (87 aa)) form a dimerization/Multimerization of capsid protein p24 region. CCHC-type zinc fingers lie at residues 389 to 406 (VKCFNCGKQGHIAKNCRA) and 410 to 427 (KGCWKCGKEGHQMKDCTE). The tract at residues 443 to 483 (EARELSPEQTRANSPTSREPRARRGDPLPETGAEGQGTVSS) is disordered. A compositionally biased stretch (polar residues) spans 449–459 (PEQTRANSPTS). Positions 460–469 (REPRARRGDP) are enriched in basic and acidic residues. A dimerization of protease region spans residues 486–490 (PQITL). The 70-residue stretch at 505–574 (REALLDTGAD…TPVNIIGRNM (70 aa)) folds into the Peptidase A2 domain. The active-site For protease activity; shared with dimeric partner is Asp-510. 2 dimerization of protease regions span residues 534–540 (GIGGFIK) and 573–585 (NMLTQLGCTLNFP). One can recognise a Reverse transcriptase domain in the interval 628-818 (EGKISRVGPE…PPFLWMGYEL (191 aa)). Asp-694, Asp-769, and Asp-770 together coordinate Mg(2+). Residues 811-819 (FLWMGYELH) are RT 'primer grip'. The short motif at 982–998 (WETWWTDYWQATWIPEW) is the Tryptophan repeat motif element. The 124-residue stretch at 1018-1141 (IMGAETFYVD…VDKLVSSGIR (124 aa)) folds into the RNase H type-1 domain. Residues Asp-1027, Glu-1062, Asp-1082, and Asp-1133 each contribute to the Mg(2+) site. The segment at 1147–1188 (DGIDKAQEDHEKYHSNWRAMASDFNLPPVVAKEIVASCDKCQ) adopts an Integrase-type zinc-finger fold. Zn(2+)-binding residues include His-1156, His-1160, Cys-1184, and Cys-1187. The Integrase catalytic domain maps to 1198-1348 (VDCSPGIWQL…SAGERIIDII (151 aa)). The Mg(2+) site is built by Asp-1208, Asp-1260, and Glu-1296. Positions 1367–1414 (FRVYYRDSRDPIWKGPAKLPWKGEGAVVIQDNSEIKVVPRRKAKIIRD) form a DNA-binding region, integrase-type.

In terms of assembly, homotrimer; further assembles as hexamers of trimers. Interacts with gp41 (via C-terminus). Interacts with host CALM1; this interaction induces a conformational change in the Matrix protein, triggering exposure of the myristate group. Interacts with host AP3D1; this interaction allows the polyprotein trafficking to multivesicular bodies during virus assembly. Part of the pre-integration complex (PIC) which is composed of viral genome, matrix protein, Vpr and integrase. Homodimer; the homodimer further multimerizes as homohexamers or homopentamers. Interacts with human PPIA/CYPA; This interaction stabilizes the capsid. Interacts with human NUP153. Interacts with host PDZD8; this interaction stabilizes the capsid. Interacts with monkey TRIM5; this interaction destabilizes the capsid. As to quaternary structure, homodimer, whose active site consists of two apposed aspartic acid residues. In terms of assembly, heterodimer of p66 RT and p51 RT (RT p66/p51). Heterodimerization of RT is essential for DNA polymerase activity. The overall folding of the subdomains is similar in p66 RT and p51 RT but the spatial arrangements of the subdomains are dramatically different. Homotetramer; may further associate as a homohexadecamer. Part of the pre-integration complex (PIC) which is composed of viral genome, matrix protein, Vpr and integrase. Interacts with human SMARCB1/INI1 and human PSIP1/LEDGF isoform 1. Interacts with human KPNA3; this interaction might play a role in nuclear import of the pre-integration complex. Interacts with human NUP153; this interaction might play a role in nuclear import of the pre-integration complex. Mg(2+) serves as cofactor. In terms of processing, specific enzymatic cleavages by the viral protease yield mature proteins. The protease is released by autocatalytic cleavage. The polyprotein is cleaved during and after budding, this process is termed maturation. Proteolytic cleavage of p66 RT removes the RNase H domain to yield the p51 RT subunit. Nucleocapsid protein p7 might be further cleaved after virus entry. Post-translationally, tyrosine phosphorylated presumably in the virion by a host kinase. Phosphorylation is apparently not a major regulator of membrane association. Phosphorylated possibly by host MAPK1; this phosphorylation is necessary for Pin1-mediated virion uncoating. In terms of processing, methylated by host PRMT6, impairing its function by reducing RNA annealing and the initiation of reverse transcription.

The protein resides in the host cell membrane. It is found in the host endosome. It localises to the host multivesicular body. The protein localises to the virion membrane. Its subcellular location is the host nucleus. The protein resides in the host cytoplasm. It is found in the virion. It carries out the reaction Specific for a P1 residue that is hydrophobic, and P1' variable, but often Pro.. It catalyses the reaction Endohydrolysis of RNA in RNA/DNA hybrids. Three different cleavage modes: 1. sequence-specific internal cleavage of RNA. Human immunodeficiency virus type 1 and Moloney murine leukemia virus enzymes prefer to cleave the RNA strand one nucleotide away from the RNA-DNA junction. 2. RNA 5'-end directed cleavage 13-19 nucleotides from the RNA end. 3. DNA 3'-end directed cleavage 15-20 nucleotides away from the primer terminus.. The enzyme catalyses 3'-end directed exonucleolytic cleavage of viral RNA-DNA hybrid.. The catalysed reaction is DNA(n) + a 2'-deoxyribonucleoside 5'-triphosphate = DNA(n+1) + diphosphate. With respect to regulation, protease: The viral protease is inhibited by many synthetic protease inhibitors (PIs), such as amprenavir, atazanavir, indinavir, loprinavir, nelfinavir, ritonavir and saquinavir. Use of protease inhibitors in tritherapy regimens permit more ambitious therapeutic strategies. Reverse transcriptase/ribonuclease H: RT can be inhibited either by nucleoside RT inhibitors (NRTIs) or by non nucleoside RT inhibitors (NNRTIs). NRTIs act as chain terminators, whereas NNRTIs inhibit DNA polymerization by binding a small hydrophobic pocket near the RT active site and inducing an allosteric change in this region. Classical NRTIs are abacavir, adefovir (PMEA), didanosine (ddI), lamivudine (3TC), stavudine (d4T), tenofovir (PMPA), zalcitabine (ddC), and zidovudine (AZT). Classical NNRTIs are atevirdine (BHAP U-87201E), delavirdine, efavirenz (DMP-266), emivirine (I-EBU), and nevirapine (BI-RG-587). The tritherapies used as a basic effective treatment of AIDS associate two NRTIs and one NNRTI. Its function is as follows. Mediates, with Gag polyprotein, the essential events in virion assembly, including binding the plasma membrane, making the protein-protein interactions necessary to create spherical particles, recruiting the viral Env proteins, and packaging the genomic RNA via direct interactions with the RNA packaging sequence (Psi). Gag-Pol polyprotein may regulate its own translation, by the binding genomic RNA in the 5'-UTR. At low concentration, the polyprotein would promote translation, whereas at high concentration, the polyprotein would encapsidate genomic RNA and then shut off translation. Targets the polyprotein to the plasma membrane via a multipartite membrane-binding signal, that includes its myristoylated N-terminus. Matrix protein is part of the pre-integration complex. Implicated in the release from host cell mediated by Vpu. Binds to RNA. Functionally, forms the conical core that encapsulates the genomic RNA-nucleocapsid complex in the virion. Most core are conical, with only 7% tubular. The core is constituted by capsid protein hexamer subunits. The core is disassembled soon after virion entry. Host restriction factors such as TRIM5-alpha or TRIMCyp bind retroviral capsids and cause premature capsid disassembly, leading to blocks in reverse transcription. Capsid restriction by TRIM5 is one of the factors which restricts HIV-1 to the human species. Host PIN1 apparently facilitates the virion uncoating. On the other hand, interactions with PDZD8 or CYPA stabilize the capsid. In terms of biological role, encapsulates and protects viral dimeric unspliced genomic RNA (gRNA). Binds these RNAs through its zinc fingers. Acts as a nucleic acid chaperone which is involved in rearangement of nucleic acid secondary structure during gRNA retrotranscription. Also facilitates template switch leading to recombination. As part of the polyprotein, participates in gRNA dimerization, packaging, tRNA incorporation and virion assembly. Its function is as follows. Aspartyl protease that mediates proteolytic cleavages of Gag and Gag-Pol polyproteins during or shortly after the release of the virion from the plasma membrane. Cleavages take place as an ordered, step-wise cascade to yield mature proteins. This process is called maturation. Displays maximal activity during the budding process just prior to particle release from the cell. Also cleaves Nef and Vif, probably concomitantly with viral structural proteins on maturation of virus particles. Hydrolyzes host EIF4GI and PABP1 in order to shut off the capped cellular mRNA translation. The resulting inhibition of cellular protein synthesis serves to ensure maximal viral gene expression and to evade host immune response. Also mediates cleavage of host YTHDF3. Mediates cleavage of host CARD8, thereby activating the CARD8 inflammasome, leading to the clearance of latent HIV-1 in patient CD4(+) T-cells after viral reactivation; in contrast, HIV-1 can evade CARD8-sensing when its protease remains inactive in infected cells prior to viral budding. Multifunctional enzyme that converts the viral RNA genome into dsDNA in the cytoplasm, shortly after virus entry into the cell. This enzyme displays a DNA polymerase activity that can copy either DNA or RNA templates, and a ribonuclease H (RNase H) activity that cleaves the RNA strand of RNA-DNA heteroduplexes in a partially processive 3' to 5' endonucleasic mode. Conversion of viral genomic RNA into dsDNA requires many steps. A tRNA(3)-Lys binds to the primer-binding site (PBS) situated at the 5'-end of the viral RNA. RT uses the 3' end of the tRNA primer to perform a short round of RNA-dependent minus-strand DNA synthesis. The reading proceeds through the U5 region and ends after the repeated (R) region which is present at both ends of viral RNA. The portion of the RNA-DNA heteroduplex is digested by the RNase H, resulting in a ssDNA product attached to the tRNA primer. This ssDNA/tRNA hybridizes with the identical R region situated at the 3' end of viral RNA. This template exchange, known as minus-strand DNA strong stop transfer, can be either intra- or intermolecular. RT uses the 3' end of this newly synthesized short ssDNA to perform the RNA-dependent minus-strand DNA synthesis of the whole template. RNase H digests the RNA template except for two polypurine tracts (PPTs) situated at the 5'-end and near the center of the genome. It is not clear if both polymerase and RNase H activities are simultaneous. RNase H probably can proceed both in a polymerase-dependent (RNA cut into small fragments by the same RT performing DNA synthesis) and a polymerase-independent mode (cleavage of remaining RNA fragments by free RTs). Secondly, RT performs DNA-directed plus-strand DNA synthesis using the PPTs that have not been removed by RNase H as primers. PPTs and tRNA primers are then removed by RNase H. The 3' and 5' ssDNA PBS regions hybridize to form a circular dsDNA intermediate. Strand displacement synthesis by RT to the PBS and PPT ends produces a blunt ended, linear dsDNA copy of the viral genome that includes long terminal repeats (LTRs) at both ends. Functionally, catalyzes viral DNA integration into the host chromosome, by performing a series of DNA cutting and joining reactions. This enzyme activity takes place after virion entry into a cell and reverse transcription of the RNA genome in dsDNA. The first step in the integration process is 3' processing. This step requires a complex comprising the viral genome, matrix protein, Vpr and integrase. This complex is called the pre-integration complex (PIC). The integrase protein removes 2 nucleotides from each 3' end of the viral DNA, leaving recessed CA OH's at the 3' ends. In the second step, the PIC enters cell nucleus. This process is mediated through integrase and Vpr proteins, and allows the virus to infect a non dividing cell. This ability to enter the nucleus is specific of lentiviruses, other retroviruses cannot and rely on cell division to access cell chromosomes. In the third step, termed strand transfer, the integrase protein joins the previously processed 3' ends to the 5' ends of strands of target cellular DNA at the site of integration. The 5'-ends are produced by integrase-catalyzed staggered cuts, 5 bp apart. A Y-shaped, gapped, recombination intermediate results, with the 5'-ends of the viral DNA strands and the 3' ends of target DNA strands remaining unjoined, flanking a gap of 5 bp. The last step is viral DNA integration into host chromosome. This involves host DNA repair synthesis in which the 5 bp gaps between the unjoined strands are filled in and then ligated. Since this process occurs at both cuts flanking the HIV genome, a 5 bp duplication of host DNA is produced at the ends of HIV-1 integration. Alternatively, Integrase may catalyze the excision of viral DNA just after strand transfer, this is termed disintegration. The polypeptide is Gag-Pol polyprotein (gag-pol) (Human immunodeficiency virus type 1 group M subtype J (isolate SE9280) (HIV-1)).